Here is a 216-residue protein sequence, read N- to C-terminus: Nucleoside triphosphate pyrophosphatase (216 aa).

Asp-86 (proton acceptor) is an active-site residue.

Belongs to the Maf family. It depends on a divalent metal cation as a cofactor.

The protein resides in the cytoplasm. It carries out the reaction a ribonucleoside 5'-triphosphate + H2O = a ribonucleoside 5'-phosphate + diphosphate + H(+). It catalyses the reaction a 2'-deoxyribonucleoside 5'-triphosphate + H2O = a 2'-deoxyribonucleoside 5'-phosphate + diphosphate + H(+). In terms of biological role, nucleoside triphosphate pyrophosphatase. May have a dual role in cell division arrest and in preventing the incorporation of modified nucleotides into cellular nucleic acids. This is Nucleoside triphosphate pyrophosphatase from Dictyostelium discoideum (Social amoeba).